The following is an 874-amino-acid chain: Probable inorganic carbon transporter subunit DabA (874 aa).

The Zn(2+) site is built by Cys-398, Asp-400, His-580, and Cys-595.

This sequence belongs to the inorganic carbon transporter (TC 9.A.2) DabA family. Forms a complex with DabB. Zn(2+) is required as a cofactor.

The protein resides in the cell membrane. Its function is as follows. Part of an energy-coupled inorganic carbon pump. The chain is Probable inorganic carbon transporter subunit DabA from Bacillus cereus (strain 03BB102).